The following is a 176-amino-acid chain: MALWRAYQRALAAHPWKVQVLTAGSLMGLGDIISQQLVERRGLQQHQTGRTLTMASLGCGFVGPVVGGWYRVLDHLIPGTTKVNALKKMLLDQGGFAPCFLGCFLPLVGVLNGMSAQDNWAKLKRDYPDALITNYYLWPAVQLANFYLVPLHYRLAVVQCVAVVWNSYLSWKAHQL.

The next 4 membrane-spanning stretches (helical) occupy residues 18–38 (VQVL…QQLV), 57–77 (LGCG…DHLI), 94–114 (GGFA…LNGM), and 131–151 (LITN…LVPL).

This sequence belongs to the peroxisomal membrane protein PXMP2/4 family.

It localises to the mitochondrion inner membrane. Its function is as follows. Non-selective channel that modulates the membrane potential under normal conditions and oxidative stress, and is involved in mitochondrial homeostasis. Involved in mitochondrial deoxynucleoside triphosphates (dNTP) pool homeostasis and mitochondrial DNA (mtDNA) maintenance. May be involved in the regulation of reactive oxygen species metabolism and the control of oxidative phosphorylation. This is Mitochondrial inner membrane protein Mpv17 from Rattus norvegicus (Rat).